The sequence spans 463 residues: tRNA (guanine(10)-N(2))-methyltransferase TRMT11 (463 aa).

At A2 the chain carries N-acetylalanine.

This sequence belongs to the class I-like SAM-binding methyltransferase superfamily. TRM11 methyltransferase family. In terms of assembly, part of the heterodimeric TRMT11-TRM112 methyltransferase complex; this complex forms an active tRNA methyltransferase, where TRMT112 acts as an activator of the catalytic subunit TRMT11.

It is found in the cytoplasm. The catalysed reaction is guanosine(10) in tRNA + S-adenosyl-L-methionine = N(2)-methylguanosine(10) in tRNA + S-adenosyl-L-homocysteine + H(+). In terms of biological role, catalytic subunit of the TRMT11-TRM112 methyltransferase complex, that specifically mediates the S-adenosyl-L-methionine-dependent N(2)-methylation of guanosine nucleotide at position 10 (m2G10) in tRNAs. This is one of the major tRNA (guanine-N(2))-methyltransferases. The chain is tRNA (guanine(10)-N(2))-methyltransferase TRMT11 from Pongo abelii (Sumatran orangutan).